The primary structure comprises 728 residues: Probable LRR receptor-like serine/threonine-protein kinase At1g14390 (728 aa).

An N-terminal signal peptide occupies residues 1–27 (MHSSSKSQAFSLTFLLFLFLLPSVSES). The Extracellular segment spans residues 28–356 (QLISSESRTL…EEDTGIELGL (329 aa)). 2 N-linked (GlcNAc...) asparagine glycosylation sites follow: Asn55 and Asn85. LRR repeat units follow at residues 74 to 96 (NGHV…RFSS), 106 to 130 (LSNL…IIRL), 131 to 155 (SSSL…ISSL), 157 to 178 (NLRS…LRGL), 179 to 202 (SNLQ…LASN), 204 to 224 (ITIS…IKKL), 225 to 248 (NKLQ…LLSL), 249 to 272 (PSLQ…SLCN), and 274 to 295 (KLRI…CFSS). Residues Asn138 and Asn169 are each glycosylated (N-linked (GlcNAc...) asparagine). N-linked (GlcNAc...) asparagine glycosylation occurs at Asn210. N-linked (GlcNAc...) asparagine glycans are attached at residues Asn253 and Asn267. A helical membrane pass occupies residues 357–377 (VIGIIIGVILVSAVLAGLVLV). The Cytoplasmic segment spans residues 378 to 728 (RMRKSRSKEE…ENLGLGGSEL (351 aa)). The Protein kinase domain maps to 421–709 (TMRSAVIGLS…DVVWNLQYTI (289 aa)).

It belongs to the protein kinase superfamily. Ser/Thr protein kinase family.

The protein localises to the membrane. The enzyme catalyses L-seryl-[protein] + ATP = O-phospho-L-seryl-[protein] + ADP + H(+). It carries out the reaction L-threonyl-[protein] + ATP = O-phospho-L-threonyl-[protein] + ADP + H(+). This Arabidopsis thaliana (Mouse-ear cress) protein is Probable LRR receptor-like serine/threonine-protein kinase At1g14390.